The primary structure comprises 480 residues: ATP synthase subunit beta (480 aa).

ATP is bound at residue 158–165 (GGAGVGKT).

It belongs to the ATPase alpha/beta chains family. F-type ATPases have 2 components, CF(1) - the catalytic core - and CF(0) - the membrane proton channel. CF(1) has five subunits: alpha(3), beta(3), gamma(1), delta(1), epsilon(1). CF(0) has three main subunits: a(1), b(2) and c(9-12). The alpha and beta chains form an alternating ring which encloses part of the gamma chain. CF(1) is attached to CF(0) by a central stalk formed by the gamma and epsilon chains, while a peripheral stalk is formed by the delta and b chains.

The protein resides in the cell inner membrane. The enzyme catalyses ATP + H2O + 4 H(+)(in) = ADP + phosphate + 5 H(+)(out). Functionally, produces ATP from ADP in the presence of a proton gradient across the membrane. The catalytic sites are hosted primarily by the beta subunits. The protein is ATP synthase subunit beta of Koribacter versatilis (strain Ellin345).